Reading from the N-terminus, the 115-residue chain is Large ribosomal subunit protein uL18 (115 aa).

It belongs to the universal ribosomal protein uL18 family. As to quaternary structure, part of the 50S ribosomal subunit; part of the 5S rRNA/L5/L18/L25 subcomplex. Contacts the 5S and 23S rRNAs.

Its function is as follows. This is one of the proteins that bind and probably mediate the attachment of the 5S RNA into the large ribosomal subunit, where it forms part of the central protuberance. The polypeptide is Large ribosomal subunit protein uL18 (Ruthia magnifica subsp. Calyptogena magnifica).